Consider the following 945-residue polypeptide: Xylosyltransferase 1 (945 aa).

Over 1–17 (MQAAPCARRLARRSHSA) the chain is Cytoplasmic. The helical; Signal-anchor for type II membrane protein transmembrane segment at 18–38 (LLAALTVLLLQTLVVWNFSSL) threads the bilayer. Over 39–945 (DSGAGERRGG…GAVKPDGRLR (907 aa)) the chain is Lumenal. Residues 42–245 (AGERRGGAAV…KYDQPPKCDI (204 aa)) are disordered. The segment covering 76–103 (RGGGGGGGGCGGGGRGPQARARGGGPGE) has biased composition (gly residues). The span at 131 to 147 (KVRTDSNNENSVPKDFE) shows a compositional bias: basic and acidic residues. A compositionally biased stretch (polar residues) spans 149–158 (VDNSNFAPRT). Basic and acidic residues predominate over residues 163-190 (HQPELAKKPPSRQKELLKRKLEQQEKGK). An N-linked (GlcNAc...) asparagine glycan is attached at Asn-212. Basic and acidic residues predominate over residues 235–245 (TKYDQPPKCDI). 4 disulfide bridges follow: Cys-243/Cys-271, Cys-287/Cys-528, Cys-547/Cys-560, and Cys-549/Cys-558. UDP-alpha-D-xylose-binding positions include Val-319, Asp-347, and 376–378 (TIW). N-linked (GlcNAc...) asparagine glycosylation occurs at Asn-407. 480-481 (DW) is a binding site for UDP-alpha-D-xylose. Residues Ser-561 and 584–585 (RK) contribute to the UDP-alpha-D-xylose site. 2 cysteine pairs are disulfide-bonded: Cys-661-Cys-913 and Cys-906-Cys-919. The N-linked (GlcNAc...) asparagine glycan is linked to Asn-763. Positions 926 to 945 (SFSPDPKSELGAVKPDGRLR) are disordered.

Belongs to the glycosyltransferase 14 family. XylT subfamily. In terms of assembly, monomer. The cofactor is a divalent metal cation. In terms of processing, contains 7 disulfide bonds. N-glycosylated.

It is found in the golgi apparatus membrane. It carries out the reaction UDP-alpha-D-xylose + L-seryl-[protein] = 3-O-(beta-D-xylosyl)-L-seryl-[protein] + UDP + H(+). It participates in glycan metabolism; chondroitin sulfate biosynthesis. It functions in the pathway glycan metabolism; heparan sulfate biosynthesis. Functionally, catalyzes the first step in the biosynthesis of chondroitin sulfate and dermatan sulfate proteoglycans, such as DCN. Transfers D-xylose from UDP-D-xylose to specific serine residues of the core protein. Required for normal maturation of chondrocytes during bone development, normal onset of ossification and normal embryonic and postnatal skeleton development, especially of the long bones. This Pan troglodytes (Chimpanzee) protein is Xylosyltransferase 1 (XYLT1).